The primary structure comprises 290 residues: UPF0761 membrane protein YihY (290 aa).

6 helical membrane-spanning segments follow: residues 44-64 (LLSL…FPMF), 104-124 (VGAC…DSAL), 140-160 (FAVY…SLAI), 183-203 (IFPL…VPTI), 210-230 (AIVG…GFAL), and 244-264 (VLAV…IVLL).

Belongs to the UPF0761 family.

It localises to the cell inner membrane. The sequence is that of UPF0761 membrane protein YihY from Escherichia coli O1:K1 / APEC.